The chain runs to 482 residues: 2-succinylbenzoate--CoA ligase (482 aa).

Belongs to the ATP-dependent AMP-binding enzyme family. MenE subfamily.

It carries out the reaction 2-succinylbenzoate + ATP + CoA = 2-succinylbenzoyl-CoA + AMP + diphosphate. The protein operates within quinol/quinone metabolism; 1,4-dihydroxy-2-naphthoate biosynthesis; 1,4-dihydroxy-2-naphthoate from chorismate: step 5/7. Its pathway is quinol/quinone metabolism; menaquinone biosynthesis. In terms of biological role, converts 2-succinylbenzoate (OSB) to 2-succinylbenzoyl-CoA (OSB-CoA). The protein is 2-succinylbenzoate--CoA ligase of Bacillus cereus (strain ATCC 14579 / DSM 31 / CCUG 7414 / JCM 2152 / NBRC 15305 / NCIMB 9373 / NCTC 2599 / NRRL B-3711).